The following is a 397-amino-acid chain: Elongation factor Tu (397 aa).

The region spanning 10–206 (KPHVNIGTIG…AVDDSIPEPQ (197 aa)) is the tr-type G domain. The segment at 19–26 (GHIDHGKT) is G1. 19 to 26 (GHIDHGKT) serves as a coordination point for GTP. Residue T26 participates in Mg(2+) binding. The interval 62-66 (GITIS) is G2. Residues 83–86 (DCPG) are G3. GTP is bound by residues 83-87 (DCPGH) and 138-141 (NKAD). The segment at 138 to 141 (NKAD) is G4. The tract at residues 176–178 (SAL) is G5.

It belongs to the TRAFAC class translation factor GTPase superfamily. Classic translation factor GTPase family. EF-Tu/EF-1A subfamily. As to quaternary structure, monomer.

The protein localises to the cytoplasm. It carries out the reaction GTP + H2O = GDP + phosphate + H(+). In terms of biological role, GTP hydrolase that promotes the GTP-dependent binding of aminoacyl-tRNA to the A-site of ribosomes during protein biosynthesis. The chain is Elongation factor Tu from Frankia alni (strain DSM 45986 / CECT 9034 / ACN14a).